We begin with the raw amino-acid sequence, 292 residues long: Probable vesicular-fusion protein sec17 homolog (292 aa).

The protein belongs to the SNAP family.

The protein resides in the membrane. In terms of biological role, required for vesicular transport between the endoplasmic reticulum and the Golgi apparatus. In Neurospora crassa (strain ATCC 24698 / 74-OR23-1A / CBS 708.71 / DSM 1257 / FGSC 987), this protein is Probable vesicular-fusion protein sec17 homolog.